A 325-amino-acid polypeptide reads, in one-letter code: MPIAPDRVRHPEKANRPDNPIQRKPEWLRVKAPTSPEYGETRSLMRGLRLNTVCEEAACPNIGECWKKKHATFMILGAVCTRACAFCNVATGRPDQLDPHEPEKVAEAVAHLKLEHIVVTSVDRDDLEDGGAGHFARTIRAIRAAAPGTTIEVLTPDFMKKKGAVETVVEARPDVFNHNLETAPRLYPTIRPGARYFTSLQLLARVKEIDPSMFTKSGIMVGLGETKEEVFQVMDDLRAADVDFMTIGQYLAPTPKHAKVDRFVTPDEFAGYVTVGRGKGFLMVASSPLTRSSYHAGADFERLRAAREAKLAGRPVAAPEATSAE.

Residues 1–24 are disordered; sequence MPIAPDRVRHPEKANRPDNPIQRK. Residues C54, C59, C65, C80, C84, C87, and S293 each contribute to the [4Fe-4S] cluster site. Residues 66–282 enclose the Radical SAM core domain; it reads WKKKHATFMI…VTVGRGKGFL (217 aa).

Belongs to the radical SAM superfamily. Lipoyl synthase family. It depends on [4Fe-4S] cluster as a cofactor.

It localises to the cytoplasm. The enzyme catalyses [[Fe-S] cluster scaffold protein carrying a second [4Fe-4S](2+) cluster] + N(6)-octanoyl-L-lysyl-[protein] + 2 oxidized [2Fe-2S]-[ferredoxin] + 2 S-adenosyl-L-methionine + 4 H(+) = [[Fe-S] cluster scaffold protein] + N(6)-[(R)-dihydrolipoyl]-L-lysyl-[protein] + 4 Fe(3+) + 2 hydrogen sulfide + 2 5'-deoxyadenosine + 2 L-methionine + 2 reduced [2Fe-2S]-[ferredoxin]. Its pathway is protein modification; protein lipoylation via endogenous pathway; protein N(6)-(lipoyl)lysine from octanoyl-[acyl-carrier-protein]: step 2/2. Its function is as follows. Catalyzes the radical-mediated insertion of two sulfur atoms into the C-6 and C-8 positions of the octanoyl moiety bound to the lipoyl domains of lipoate-dependent enzymes, thereby converting the octanoylated domains into lipoylated derivatives. The polypeptide is Lipoyl synthase (Rhodospirillum centenum (strain ATCC 51521 / SW)).